A 347-amino-acid polypeptide reads, in one-letter code: Quinolinate synthase (347 aa).

Iminosuccinate-binding residues include H47 and S68. C113 serves as a coordination point for [4Fe-4S] cluster. Iminosuccinate-binding positions include 139–141 (YAN) and S156. C200 contributes to the [4Fe-4S] cluster binding site. Iminosuccinate is bound by residues 226–228 (HPE) and T243. C297 lines the [4Fe-4S] cluster pocket.

Belongs to the quinolinate synthase family. Type 1 subfamily. Requires [4Fe-4S] cluster as cofactor.

It is found in the cytoplasm. It catalyses the reaction iminosuccinate + dihydroxyacetone phosphate = quinolinate + phosphate + 2 H2O + H(+). It participates in cofactor biosynthesis; NAD(+) biosynthesis; quinolinate from iminoaspartate: step 1/1. Catalyzes the condensation of iminoaspartate with dihydroxyacetone phosphate to form quinolinate. The polypeptide is Quinolinate synthase (Escherichia coli O45:K1 (strain S88 / ExPEC)).